The chain runs to 111 residues: Large ribosomal subunit protein uL22 (111 aa).

The protein belongs to the universal ribosomal protein uL22 family. In terms of assembly, part of the 50S ribosomal subunit.

Functionally, this protein binds specifically to 23S rRNA; its binding is stimulated by other ribosomal proteins, e.g. L4, L17, and L20. It is important during the early stages of 50S assembly. It makes multiple contacts with different domains of the 23S rRNA in the assembled 50S subunit and ribosome. Its function is as follows. The globular domain of the protein is located near the polypeptide exit tunnel on the outside of the subunit, while an extended beta-hairpin is found that lines the wall of the exit tunnel in the center of the 70S ribosome. In Protochlamydia amoebophila (strain UWE25), this protein is Large ribosomal subunit protein uL22.